A 387-amino-acid chain; its full sequence is Glucose-1-phosphate adenylyltransferase (387 aa).

Residues Tyr99, Gly164, 179–180 (EK), and Ser190 each bind alpha-D-glucose 1-phosphate.

The protein belongs to the bacterial/plant glucose-1-phosphate adenylyltransferase family. In terms of assembly, homotetramer.

It catalyses the reaction alpha-D-glucose 1-phosphate + ATP + H(+) = ADP-alpha-D-glucose + diphosphate. It participates in glycan biosynthesis; glycogen biosynthesis. Involved in the biosynthesis of ADP-glucose, a building block required for the elongation reactions to produce glycogen. Catalyzes the reaction between ATP and alpha-D-glucose 1-phosphate (G1P) to produce pyrophosphate and ADP-Glc. The sequence is that of Glucose-1-phosphate adenylyltransferase from Geobacillus stearothermophilus (Bacillus stearothermophilus).